A 420-amino-acid polypeptide reads, in one-letter code: Protein ECERIFERUM 26-like (420 aa).

It belongs to the plant acyltransferase family. As to expression, highly expressed in flowers. Expressed in leaves.

In terms of biological role, involved in biosynthesis of the epicuticular wax. Plays a role in very-long-chain fatty acid (VLCFA) biosynthesis and is required for VLCFA elongation in leaf. Despite its classification as a BAHD acyltransferase based on sequence homology, CER26L does not seem to share the catalytic mechanism of the members of the BAHD family. In Arabidopsis thaliana (Mouse-ear cress), this protein is Protein ECERIFERUM 26-like (CER26L).